Here is a 364-residue protein sequence, read N- to C-terminus: Glutamine synthetase (364 aa).

The GS beta-grasp domain occupies 15-94 (VLAEYIWIDA…VLAECWNNDG (80 aa)). Positions 101 to 364 (HRHECAKLMS…ETKRGEEEGF (264 aa)) constitute a GS catalytic domain.

This sequence belongs to the glutamine synthetase family. Homooctamer.

The protein localises to the cytoplasm. It catalyses the reaction L-glutamate + NH4(+) + ATP = L-glutamine + ADP + phosphate + H(+). The sequence is that of Glutamine synthetase (GLN1) from Yarrowia lipolytica (strain CLIB 122 / E 150) (Yeast).